Reading from the N-terminus, the 442-residue chain is tRNA modification GTPase MnmE (442 aa).

(6S)-5-formyl-5,6,7,8-tetrahydrofolate-binding residues include Arg-24, Glu-84, and Arg-124. In terms of domain architecture, TrmE-type G spans 218–366 (GARVALFGPV…LRDDMLGRLW (149 aa)). Residues 228–233 (NAGKST), 247–253 (DDEPGTT), and 272–275 (DTAG) each bind GTP. The Mg(2+) site is built by Ser-232 and Thr-253. Position 442 (Lys-442) interacts with (6S)-5-formyl-5,6,7,8-tetrahydrofolate.

Belongs to the TRAFAC class TrmE-Era-EngA-EngB-Septin-like GTPase superfamily. TrmE GTPase family. Homodimer. Heterotetramer of two MnmE and two MnmG subunits. K(+) is required as a cofactor.

The protein resides in the cytoplasm. Exhibits a very high intrinsic GTPase hydrolysis rate. Involved in the addition of a carboxymethylaminomethyl (cmnm) group at the wobble position (U34) of certain tRNAs, forming tRNA-cmnm(5)s(2)U34. The chain is tRNA modification GTPase MnmE from Myxococcus xanthus (strain DK1622).